The sequence spans 473 residues: Photosystem II CP43 reaction center protein (473 aa).

Positions 1–14 (MKTLYSLRRYFHVE) are excised as a propeptide. Thr-15 carries the post-translational modification N-acetylthreonine. Thr-15 bears the Phosphothreonine mark. The next 5 membrane-spanning stretches (helical) occupy residues 69–93 (LFEV…PHLA), 134–155 (LIGP…KDKN), 178–200 (KAMY…RVIS), 255–275 (KPFA…LSYS), and 291–312 (WFNN…ASQA). Residue Glu-367 coordinates [CaMn4O5] cluster. A helical transmembrane segment spans residues 447 to 471 (RARAAAAGFEKGIDRDTEPVLSMRP).

This sequence belongs to the PsbB/PsbC family. PsbC subfamily. PSII is composed of 1 copy each of membrane proteins PsbA, PsbB, PsbC, PsbD, PsbE, PsbF, PsbH, PsbI, PsbJ, PsbK, PsbL, PsbM, PsbT, PsbX, PsbY, PsbZ, Psb30/Ycf12, at least 3 peripheral proteins of the oxygen-evolving complex and a large number of cofactors. It forms dimeric complexes. The cofactor is Binds multiple chlorophylls and provides some of the ligands for the Ca-4Mn-5O cluster of the oxygen-evolving complex. It may also provide a ligand for a Cl- that is required for oxygen evolution. PSII binds additional chlorophylls, carotenoids and specific lipids..

The protein localises to the plastid. Its subcellular location is the chloroplast thylakoid membrane. Functionally, one of the components of the core complex of photosystem II (PSII). It binds chlorophyll and helps catalyze the primary light-induced photochemical processes of PSII. PSII is a light-driven water:plastoquinone oxidoreductase, using light energy to abstract electrons from H(2)O, generating O(2) and a proton gradient subsequently used for ATP formation. This Ostreococcus tauri protein is Photosystem II CP43 reaction center protein.